The primary structure comprises 358 residues: MQVFNFSAGPAMMPKVVLEQAQQELLNWLDQGTSVMEVSHRGKYFMEMITQAEKDFRQLYNIPENYKVLFLQGGARGQFAAIPMNLANKKGKTLYLTSGHWSATAAKEARLFTEVDEINILLDGKLEVGELDFSHIASQYDYVHYCPNETISGVEIVDVPNVGEAVLVADMSSNILSREIDISKFGVIYAGAQKNLGPAGITVVIVREDLIGHARKETPSIWNYEIQSKNSSMINTPPTFAWYLCSLVFKYLLAQGGIKEMAKLNREKAKLLYDFLDQSDFYHNVVAPKNRSLMNVTFTTNNDELNAKFVAEATACGLQALKGHKVLGGMRASIYNAMPIEGIKALIEFMRKFEAENN.

Arg41 is a binding site for L-glutamate. Pyridoxal 5'-phosphate-binding positions include 75–76, Trp101, Thr150, Asp170, and Gln193; that span reads AR. N6-(pyridoxal phosphate)lysine is present on Lys194. Pyridoxal 5'-phosphate is bound at residue 235 to 236; it reads NT.

It belongs to the class-V pyridoxal-phosphate-dependent aminotransferase family. SerC subfamily. As to quaternary structure, homodimer. The cofactor is pyridoxal 5'-phosphate.

Its subcellular location is the cytoplasm. It carries out the reaction O-phospho-L-serine + 2-oxoglutarate = 3-phosphooxypyruvate + L-glutamate. It catalyses the reaction 4-(phosphooxy)-L-threonine + 2-oxoglutarate = (R)-3-hydroxy-2-oxo-4-phosphooxybutanoate + L-glutamate. It participates in amino-acid biosynthesis; L-serine biosynthesis; L-serine from 3-phospho-D-glycerate: step 2/3. The protein operates within cofactor biosynthesis; pyridoxine 5'-phosphate biosynthesis; pyridoxine 5'-phosphate from D-erythrose 4-phosphate: step 3/5. In terms of biological role, catalyzes the reversible conversion of 3-phosphohydroxypyruvate to phosphoserine and of 3-hydroxy-2-oxo-4-phosphonooxybutanoate to phosphohydroxythreonine. This chain is Phosphoserine aminotransferase, found in Histophilus somni (strain 129Pt) (Haemophilus somnus).